The sequence spans 358 residues: Guanidino acid hydrolase, mitochondrial (358 aa).

A mitochondrion-targeting transit peptide spans 1–36 (MLRLLRSSWARGLGSGVATWRPSAGLFRPGCPGIRQ). The disordered stretch occupies residues 31 to 56 (CPGIRQASGASDTPHHQSPSSESPVQ). Residues 46 to 56 (HQSPSSESPVQ) show a composition bias toward low complexity. The Mn(2+) site is built by Gln-168 and His-193. An N6-acetyllysine modification is found at Lys-199. At Lys-223 the chain carries N6-acetyllysine; alternate. An N6-succinyllysine; alternate modification is found at Lys-223. Asp-284 lines the Mn(2+) pocket.

This sequence belongs to the arginase family. Agmatinase subfamily. Mn(2+) is required as a cofactor. In terms of tissue distribution, detected only in liver.

Its subcellular location is the mitochondrion. It carries out the reaction 3-guanidinopropanoate + H2O = urea + beta-alanine. The enzyme catalyses 4-guanidinobutanoate + H2O = urea + 4-aminobutanoate. It catalyses the reaction taurocyamine + H2O = urea + taurine. The catalysed reaction is L-arginine + H2O = urea + L-ornithine. It functions in the pathway nitrogen metabolism; urea cycle; L-ornithine and urea from L-arginine: step 1/1. Functionally, hydrolyzes linear guanidino acids to form urea and the corresponding amines. Displays specificity for substrates having a negatively charged head group and short chains including taurocyamine, guanidino propanoic and butanoic acids. May protect cells by detoxifying potentially harmful amounts of guanidino acids. Metabolizes L-arginine with low efficiency. This is Guanidino acid hydrolase, mitochondrial (Agmat) from Mus musculus (Mouse).